We begin with the raw amino-acid sequence, 102 residues long: Small ribosomal subunit protein uS10 (102 aa).

Belongs to the universal ribosomal protein uS10 family. Part of the 30S ribosomal subunit.

Functionally, involved in the binding of tRNA to the ribosomes. The protein is Small ribosomal subunit protein uS10 of Streptococcus uberis (strain ATCC BAA-854 / 0140J).